The sequence spans 252 residues: Transcriptional regulatory protein HptR (252 aa).

One can recognise a Response regulatory domain in the interval 3 to 118 (KVVICDDERI…QLEVILGRLV (116 aa)). The residue at position 55 (Asp55) is a 4-aspartylphosphate. Positions 153 to 250 (NQIVDQIKQS…QMSPSDYCKQ (98 aa)) constitute an HTH araC/xylS-type domain. 2 DNA-binding regions (H-T-H motif) span residues 170 to 191 (SDLI…KDHV) and 217 to 240 (HYEI…KKYL).

Phosphorylated by HptS.

It is found in the cytoplasm. In terms of biological role, member of the two-component regulatory system HptS/HptR that regulates genes involved in hexose phosphate transport system in response to changes in extracellular phosphate sources. Activates uhpT expression to facilitate glucose-6-phosphate/G6P utilization by directly binding to its promoter. Antagonizes CcpA-dependent transcription of a subset of CcpA-regulated genes involved in antibiotic susceptibility. The polypeptide is Transcriptional regulatory protein HptR (hptR) (Staphylococcus aureus (strain Mu50 / ATCC 700699)).